A 478-amino-acid chain; its full sequence is MDLLKKEYTGITYISGPLLFVENAKDLAYGAIVDIKDGTGRVRGGQVIEVSEEYAVIQVFEETTGLDLATTSVSLVEDVARLGVSKEMLGRRFNGIGKPIDGLPPITPEKRLPITGLPLNPVARRKPEQFIQTGISTIDVMNTLVRGQKLPIFSGSGLPANEIAAQIARQATVRPDLSGEGEKEEPFAVVFAAMGITQRELSYFIQEFERTGALSRSVLFLNKADDPTIERILTPRMALTVAEYLAFEHDYHVLVILTDMTNYCEALREIGAAREEIPGRRGYPGYMYTDLATIYERAGVVEGKKGSVTQIPILSMPDDDRTHPIPDLTGYITEGQIQLSRELHRKGIYPPIDPLPSLSRLMNNGVGKGKTREDHKQVSDQLYSAYANGVDIRKLVAIIGEDALTENDRRYLQFADAFERFFINQGQQNRSIEESLQIAWALLSMLPQGELKRISKDHIGKYYGQKLEEIWGAPQALD.

Belongs to the ATPase alpha/beta chains family.

Its function is as follows. Produces ATP from ADP in the presence of a proton gradient across the membrane. The V-type beta chain is a regulatory subunit. The protein is V-type ATP synthase beta chain of Thermus thermophilus (strain ATCC BAA-163 / DSM 7039 / HB27).